The following is a 714-amino-acid chain: MNSGLSRLGIALLAAMFAPALLAADLEKLDVAALPGDRVELKLQFDEPVAAPRGYTIEQPARIALDLPGVQNKLGTKNRELSVGNTRSVTVVEAKDRTRLIINLTALSSYTTRVEGNNLFVVVGNSPAGASVASAAPVKASPAPASYAQPIKPKPYVPAGRAIRNIDFQRGEKGEGNVVIDLSDPTLSPDIQEQGGKIRLDFAKTQLPDALRVRLDVKDFATPVQFVNASAQSDRTSITIEPSGLYDYLVYQTDNRLTVSIKPMTTEDAERRKKDNFAYTGEKLSLNFQDIDVRSVLQLIADFTDLNLVASDTVQGNITLRLQNVPWDQALDLVLKTKGLDKRKLGNVLLVAPADEIAARERQELEAQKQIAELAPLRRELIQVNYAKAADIAKLFQSVTSDGGQEGKEGGRGSITVDDRTNSIIAYQPQERLDELRRIVSQLDIPVRQVMIEARIVEANVGYDKSLGVRWGGAYHKGNWSGYGKDGNIGIKDEDGMNCGPIAGSCTFPTTGTSKSPSPFVDLGAKDATSGIGIGFITDNIILDLQLSAMEKTGNGEIVSQPKVVTSDKETAKILKGSEVPYQEASSSGATSTSFKEAALSLEVTPQITPDNRIIVEVKVTKDAPDYQNMLNGVPPINKNEVNAKILVNDGETIVIGGVFSNEQSKSVEKVPFLGELPYLGRLFRRDTVTDRKNELLVFLTPRIMNNQAIAIGR.

The signal sequence occupies residues 1-24; it reads MNSGLSRLGIALLAAMFAPALLAA.

Belongs to the bacterial secretin family. PilQ subfamily.

The protein localises to the cell outer membrane. In terms of biological role, essential for the formation of pili. Involved in the biogenesis of type 4 fimbriae probably by serving as a 'porthole' allowing passage of the fimbrae through the outer membrane. This is Fimbrial assembly protein PilQ (pilQ) from Pseudomonas aeruginosa (strain ATCC 15692 / DSM 22644 / CIP 104116 / JCM 14847 / LMG 12228 / 1C / PRS 101 / PAO1).